The chain runs to 160 residues: Epithelial membrane protein 1 (160 aa).

A helical membrane pass occupies residues 1–21 (MLVLLAGLFVVHIATAIMLFV). The N-linked (GlcNAc...) asparagine glycan is linked to N43. 3 helical membrane passes run 67–87 (FMILSIIFSIISLVVFVFQLF), 95–115 (FFLSGSTMLVCWLCILIGVSI), and 137–157 (FILTWICFCFSFIIGILYMVL).

This sequence belongs to the PMP-22/EMP/MP20 family. Most prominently found in the gastrointestinal tract, skin, lung, and brain but not in liver.

It is found in the membrane. The protein is Epithelial membrane protein 1 (Emp1) of Rattus norvegicus (Rat).